Reading from the N-terminus, the 258-residue chain is Proteasome subunit alpha (258 aa).

It belongs to the peptidase T1A family. The 20S proteasome core is composed of 14 alpha and 14 beta subunits that assemble into four stacked heptameric rings, resulting in a barrel-shaped structure. The two inner rings, each composed of seven catalytic beta subunits, are sandwiched by two outer rings, each composed of seven alpha subunits. The catalytic chamber with the active sites is on the inside of the barrel. Has a gated structure, the ends of the cylinder being occluded by the N-termini of the alpha-subunits. Is capped by the proteasome-associated ATPase, ARC.

The protein resides in the cytoplasm. It functions in the pathway protein degradation; proteasomal Pup-dependent pathway. The formation of the proteasomal ATPase ARC-20S proteasome complex, likely via the docking of the C-termini of ARC into the intersubunit pockets in the alpha-rings, may trigger opening of the gate for substrate entry. Interconversion between the open-gate and close-gate conformations leads to a dynamic regulation of the 20S proteasome proteolysis activity. Component of the proteasome core, a large protease complex with broad specificity involved in protein degradation. In Nocardia farcinica (strain IFM 10152), this protein is Proteasome subunit alpha.